Here is a 438-residue protein sequence, read N- to C-terminus: GTPase Der (438 aa).

EngA-type G domains are found at residues 4-168 and 176-351; these read PIVA…PAVP and LKVA…EAAN. Residues 10–17, 57–61, 120–123, 182–189, 229–233, and 294–297 contribute to the GTP site; these read GRPNVGKS, DTGGI, NKVE, DTAGM, and NKWD. The 85-residue stretch at 352–436 folds into the KH-like domain; it reads RRVATGTLNA…PIRLIFRRGR (85 aa).

The protein belongs to the TRAFAC class TrmE-Era-EngA-EngB-Septin-like GTPase superfamily. EngA (Der) GTPase family. As to quaternary structure, associates with the 50S ribosomal subunit.

GTPase that plays an essential role in the late steps of ribosome biogenesis. This chain is GTPase Der, found in Moorella thermoacetica (strain ATCC 39073 / JCM 9320).